The sequence spans 860 residues: Ubiquitin fusion degradation protein 3 homolog (860 aa).

WD repeat units lie at residues 27 to 65, 71 to 112, 115 to 154, 163 to 203, 204 to 242, and 244 to 283; these read AHKS…YTKT, PKGI…PYAI, EHKQ…SSSF, GHTL…SVFK, GHTD…ILRK, and ATQA…DGNL. The PFU domain maps to 397–497; the sequence is PIHYLEEITR…DKLSKGAASA (101 aa). Residues 494-585 are disordered; it reads AASAQSGYED…LPQNKKKPRG (92 aa). Positions 586 to 856 constitute a PUL domain; the sequence is PLVPVPDFYI…KNIARDIVEM (271 aa).

This sequence belongs to the WD repeat PLAP family. As to quaternary structure, interacts with cdc-48.1. Expressed in intestine (at protein level).

The protein resides in the cytoplasm. In terms of biological role, plays a role in protein ubiquitination, sorting and degradation through its association with cdc-48.1 and/or cdc-48.2. This Caenorhabditis elegans protein is Ubiquitin fusion degradation protein 3 homolog.